The sequence spans 186 residues: Lipid A acyltransferase PagP (186 aa).

The signal sequence occupies residues 1–25 (MNVSKYVAIFSFVFIQLISVGKVFA). Active-site residues include His58, Asp101, and Ser102.

Belongs to the lipid A palmitoyltransferase family. Homodimer.

It is found in the cell outer membrane. The enzyme catalyses a lipid A + a 1,2-diacyl-sn-glycero-3-phosphocholine = a hepta-acyl lipid A + a 2-acyl-sn-glycero-3-phosphocholine. It carries out the reaction a lipid IVA + a 1,2-diacyl-sn-glycero-3-phosphocholine = a lipid IVB + a 2-acyl-sn-glycero-3-phosphocholine. The catalysed reaction is a lipid IIA + a 1,2-diacyl-sn-glycero-3-phosphocholine = a lipid IIB + a 2-acyl-sn-glycero-3-phosphocholine. Functionally, transfers a fatty acid residue from the sn-1 position of a phospholipid to the N-linked hydroxyfatty acid chain on the proximal unit of lipid A or its precursors. The sequence is that of Lipid A acyltransferase PagP from Shigella flexneri serotype X (strain 2002017).